A 273-amino-acid chain; its full sequence is Terpene cyclase ascF (273 aa).

7 consecutive transmembrane segments (helical) span residues 18-38 (VYEA…ILIA), 49-69 (MPLF…LWVV), 78-98 (MTIW…HGVL), 113-133 (ILVG…SWWI), 153-173 (YWAV…MLCV), 178-198 (GGVS…GLNM), and 217-237 (APAV…GFVL).

This sequence belongs to the paxB family.

The protein resides in the membrane. The enzyme catalyses ilicicolin A epoxide = ilicicolin C. It functions in the pathway secondary metabolite biosynthesis; terpenoid biosynthesis. In terms of biological role, terpene cyclase; part of the asc-1 gene cluster that mediates the biosynthesis of both ascochlorin and ascofuranone, a strong inhibitor of cyanide-insensitive alternative oxidases and a promising drug candidate against African trypanosomiasis. The first step in the pathway is performed by the non-reducing polyketide synthase ascC that produces orsellinic acid by condensing acetyl-CoA with 3 malonyl-CoA units. Orsellinic acid is then prenylated by the prenyltransferase ascA to yield ilicicolinic acid B. Ilicicolinic acid B is further reduced to ilicicolin B by the reductase ascB. The halogenase ascD then chlorinates ilicicolin B to produce ilicicolin A which is converted to ilicicolin A epoxide by the cytochrome P450 monooxygenase ascE that catalyzes stereoselective epoxidation of the terminal double bond of the prenyl group. Ilicicolin A epoxide is the last common precursor for the biosynthesis of ascofuranone and ascochlorin. The terpene cyclase ascF produces a monocyclic terpene, and the cyclization reaction is proposed to be initiated by protonation of the terminal epoxide of ilicicolin A epoxide to generate a monocyclic tertiarycation, which is followed by a series of hydride and methyl shifts with abstraction of proton, leading to the formation of the (14S,15R,19R)-trimethylcyclohexanone ring structure of ilicicolin C, which is finally reduced to ascochlorin by the dehydrogenase ascG. On the other hand, ilicicolin A epoxide is hydroxylated by the cytochrome P450 monooxygenase ascH, and the resultant product is cyclized by the terpene cyclase ascI to ascofuranol via protonation-initiated epoxide ring opening, which facilitates the 6-endo-tet cyclization to form the tetrahy-drofuran ring. Finally, ascofuranol is oxidized into ascofuranone by ascJ. This Acremonium egyptiacum (Oospora egyptiaca) protein is Terpene cyclase ascF.